The following is a 434-amino-acid chain: MNRKTSESLYQEAQHVIVGGVNSPSRAYKGVGGGTPVFMERGEGAYFYDVDGNRYIDYLAAYGPIITGHAHPVITKAIQDQAAKGVLFGTPTRLENEFAQELTNAIPSLEKVRFVNSGTEAVMTTIRVARAYTGKEKIIKFAGCYHGHSDLVLVAAGSGPSTLGTPDSAGVTAATASEVITVPFNDIEAFKEALAHWGSETAAVLVEPIVGNFGIVEPEPGFLEAVNDLAHSAGALVIYDEVITAFRFMYGGAQDYLNVKPDMTALGKIIGGGLPIGAYGGRMDIMEQVAPLGPAYQAGTMAGNPASMSAGIACLEVLRTEGVYEKLDELGARLEEGLYLAAAKANVPISINRLKGALTVYFTDEPVIDYEGAKRSNGDQFSVFFKAMLNEGIHLAPSKYEAWFLTIAHTKNDIDETIEAAYRSFKTVAAGFYS.

Lys-268 is modified (N6-(pyridoxal phosphate)lysine).

It belongs to the class-III pyridoxal-phosphate-dependent aminotransferase family. HemL subfamily. In terms of assembly, homodimer. Requires pyridoxal 5'-phosphate as cofactor.

It is found in the cytoplasm. It carries out the reaction (S)-4-amino-5-oxopentanoate = 5-aminolevulinate. It functions in the pathway porphyrin-containing compound metabolism; protoporphyrin-IX biosynthesis; 5-aminolevulinate from L-glutamyl-tRNA(Glu): step 2/2. This is Glutamate-1-semialdehyde 2,1-aminomutase 1 from Shouchella clausii (strain KSM-K16) (Alkalihalobacillus clausii).